The chain runs to 677 residues: UvrABC system protein B (677 aa).

The Helicase ATP-binding domain occupies 25–412 (QGVNGGERYQ…GGEVAQQVIR (388 aa)). 38–45 (GATGTGKT) contributes to the ATP binding site. Positions 91-114 (YYDYYQPEAYVPVSDTYIAKTASI) match the Beta-hairpin motif. Positions 429–591 (QVDDLLGEIR…IVPTAAGKKA (163 aa)) constitute a Helicase C-terminal domain. Positions 639–674 (PELIDQLEGKMKEAAKKLDFEDAANLRDRIKQLRQK) constitute a UVR domain.

This sequence belongs to the UvrB family. Forms a heterotetramer with UvrA during the search for lesions. Interacts with UvrC in an incision complex.

Its subcellular location is the cytoplasm. Its function is as follows. The UvrABC repair system catalyzes the recognition and processing of DNA lesions. A damage recognition complex composed of 2 UvrA and 2 UvrB subunits scans DNA for abnormalities. Upon binding of the UvrA(2)B(2) complex to a putative damaged site, the DNA wraps around one UvrB monomer. DNA wrap is dependent on ATP binding by UvrB and probably causes local melting of the DNA helix, facilitating insertion of UvrB beta-hairpin between the DNA strands. Then UvrB probes one DNA strand for the presence of a lesion. If a lesion is found the UvrA subunits dissociate and the UvrB-DNA preincision complex is formed. This complex is subsequently bound by UvrC and the second UvrB is released. If no lesion is found, the DNA wraps around the other UvrB subunit that will check the other stand for damage. The chain is UvrABC system protein B from Parasynechococcus marenigrum (strain WH8102).